The primary structure comprises 153 residues: Interleukin-4 (153 aa).

The first 24 residues, 1–24 (MGLTSQLLPPLFFLLACAGNFAHG), serve as a signal peptide directing secretion. Disulfide bonds link Cys27–Cys151, Cys48–Cys89, and Cys70–Cys123. The N-linked (GlcNAc...) asparagine glycan is linked to Asn62.

This sequence belongs to the IL-4/IL-13 family.

It localises to the secreted. Participates in at least several B-cell activation processes as well as of other cell types. It is a costimulator of DNA-synthesis. It induces the expression of class II MHC molecules on resting B-cells. It enhances both secretion and cell surface expression of IgE and IgG1. It also regulates the expression of the low affinity Fc receptor for IgE (CD23) on both lymphocytes and monocytes. Positively regulates IL31RA expression in macrophages. Stimulates autophagy in dendritic cells by interfering with mTORC1 signaling and through the induction of RUFY4. In Papio anubis (Olive baboon), this protein is Interleukin-4 (IL4).